Reading from the N-terminus, the 509-residue chain is Maturase K (509 aa).

This sequence belongs to the intron maturase 2 family. MatK subfamily.

Its subcellular location is the plastid. It localises to the chloroplast. Usually encoded in the trnK tRNA gene intron. Probably assists in splicing its own and other chloroplast group II introns. This chain is Maturase K, found in Clematis lasiantha (Pipestem clematis).